The primary structure comprises 662 residues: MKEENSQAHYLALCRELEDHDYSYYVLHRPRISDYEYDMKLRKLLEIERSHPEWKVLWSPSTRLGDRPSGTFSVVSHKEPMLSIANSYSKEELSEFFSRVEKSLGTSPRYTVELKIDGIAVAIRYEDRVLVQALSRGNGKQGEDITSNIRTIRSLPLRLPEDAPEFIEVRGEVFFSYSTFQIINEKQQQLEKTIFANPRNAAGGTLKLLSPQEVAKRKLEISIYNLIAPGDNDSHYENLQRCLEWGFPVSGKPRLCSTPEEVISVLKTIETERASLPMEIDGAVIKVDSLASQRVLGATGKHYRWALAYKYAPEEAETLLEDILVQVGRTGVLTPVAKLTPVLLSGSLVSRASLYNEDEIHRKDIRIGDTVCVAKGGEVIPKVVRVCREKRPEGSEVWNMPEFCPVCHSHVVREEDRVSVRCVNPECVAGAIEKIRFFVGRGALNIDHLGVKVITKLFELGLVHTCADLFQLTTEDLMQIPGIRERSARNILESIEQAKHVDLDRFLVALGIPLIGIGVATVLAGHFETLDRVISATFEELLSLEGIGEKVAHAIAEYFSDSTHLNEIKKMQDLGVCISPYHKSGSTCFGKAFVITGTLEGMSRLDAETAIRNCGGKVGSSVSKQTDYVVMGNNPGSKLEKARKLGVSILDQEAFTNLIHLE.

NAD(+)-binding positions include 34-38 (DYEYD), 83-84 (SI), and E113. K115 acts as the N6-AMP-lysine intermediate in catalysis. The NAD(+) site is built by R136, E172, K286, and K310. Residues C404, C407, C422, and C427 each contribute to the Zn(2+) site. The 80-residue stretch at 583–662 (KSGSTCFGKA…EAFTNLIHLE (80 aa)) folds into the BRCT domain.

This sequence belongs to the NAD-dependent DNA ligase family. LigA subfamily. Mg(2+) is required as a cofactor. It depends on Mn(2+) as a cofactor.

The enzyme catalyses NAD(+) + (deoxyribonucleotide)n-3'-hydroxyl + 5'-phospho-(deoxyribonucleotide)m = (deoxyribonucleotide)n+m + AMP + beta-nicotinamide D-nucleotide.. In terms of biological role, DNA ligase that catalyzes the formation of phosphodiester linkages between 5'-phosphoryl and 3'-hydroxyl groups in double-stranded DNA using NAD as a coenzyme and as the energy source for the reaction. It is essential for DNA replication and repair of damaged DNA. In Chlamydia pneumoniae (Chlamydophila pneumoniae), this protein is DNA ligase.